A 344-amino-acid polypeptide reads, in one-letter code: Estradiol 17-beta-dehydrogenase 1 (344 aa).

An NAD(+)-binding site is contributed by 3–32 (STVVLITGCSSGIGLHLAVRLASDRSQSFK). S143 provides a ligand contact to substrate. Y156 serves as the catalytic Proton acceptor.

The protein belongs to the short-chain dehydrogenases/reductases (SDR) family. As to quaternary structure, homodimer.

The protein localises to the cytoplasm. It catalyses the reaction 17beta-estradiol + NAD(+) = estrone + NADH + H(+). The enzyme catalyses 17beta-estradiol + NADP(+) = estrone + NADPH + H(+). Its pathway is steroid biosynthesis; estrogen biosynthesis. Favors the reduction of estrogens and androgens. Uses preferentially NADH. The chain is Estradiol 17-beta-dehydrogenase 1 (Hsd17b1) from Rattus norvegicus (Rat).